Here is a 329-residue protein sequence, read N- to C-terminus: Alpha/beta hydrolase domain-containing protein 17C (329 aa).

Residues 53–79 (GASAPAPAQATAAAAAAQPAPQQPEEG) are compositionally biased toward low complexity. The tract at residues 53–85 (GASAPAPAQATAAAAAAQPAPQQPEEGAGAGPG) is disordered. Active-site charge relay system residues include Ser211, Asp276, and His305.

Belongs to the AB hydrolase superfamily. ABHD17 family. Post-translationally, palmitoylated on cysteine residues located in a cysteine cluster at the N-terminus which promotes membrane localization. Palmitoylation is required for post-synaptic localization and for depalmitoylating activity towards DLG4/PSD95.

The protein resides in the recycling endosome membrane. Its subcellular location is the cell projection. The protein localises to the dendritic spine. It localises to the postsynaptic density membrane. It carries out the reaction S-hexadecanoyl-L-cysteinyl-[protein] + H2O = L-cysteinyl-[protein] + hexadecanoate + H(+). Inhibited by palmostatin-B. In terms of biological role, hydrolyzes fatty acids from S-acylated cysteine residues in proteins. Has depalmitoylating activity towards NRAS and DLG4/PSD95. The polypeptide is Alpha/beta hydrolase domain-containing protein 17C (Homo sapiens (Human)).